We begin with the raw amino-acid sequence, 59 residues long: Putative zinc finger protein ORF59a (59 aa).

The C2H2-type; degenerate zinc-finger motif lies at 11–33 (YQCLRCGLTFRTKKQLIRHLVNT).

The protein is Putative zinc finger protein ORF59a of Acidianus hospitalis (AFV-1).